The following is a 450-amino-acid chain: UDP-N-acetylmuramoylalanine--D-glutamate ligase (450 aa).

119-125 lines the ATP pocket; sequence GSNGKTT.

It belongs to the MurCDEF family.

The protein resides in the cytoplasm. The enzyme catalyses UDP-N-acetyl-alpha-D-muramoyl-L-alanine + D-glutamate + ATP = UDP-N-acetyl-alpha-D-muramoyl-L-alanyl-D-glutamate + ADP + phosphate + H(+). It functions in the pathway cell wall biogenesis; peptidoglycan biosynthesis. Functionally, cell wall formation. Catalyzes the addition of glutamate to the nucleotide precursor UDP-N-acetylmuramoyl-L-alanine (UMA). The sequence is that of UDP-N-acetylmuramoylalanine--D-glutamate ligase from Streptococcus pneumoniae (strain Hungary19A-6).